We begin with the raw amino-acid sequence, 500 residues long: Putative beta-lactamase-like 1 (500 aa).

This sequence belongs to the beta-lactamase family.

This chain is Putative beta-lactamase-like 1 (LACTBL1), found in Homo sapiens (Human).